We begin with the raw amino-acid sequence, 464 residues long: Protein FAM90A16 (464 aa).

3 disordered regions span residues 1–42, 70–389, and 415–437; these read MMAR…DPRL, PATL…HDGA, and HSPEKPGAFLAQSPHVSEKSEAP. Basic and acidic residues-rich tracts occupy residues 74-89 and 97-114; these read GKKEGKENLKPWKPRV and NKDKGEKEERPRQQDPQR. The span at 180–197 shows a compositional bias: low complexity; the sequence is LASLSPLRKASLSSSSSL.

Belongs to the FAM90 family.

In Homo sapiens (Human), this protein is Protein FAM90A16.